The following is a 135-amino-acid chain: Small ribosomal subunit protein uS12 (135 aa).

The disordered stretch occupies residues 1–24 (MPTINQLVRKGRHSKTTKSKSPAL). Over residues 9-18 (RKGRHSKTTK) the composition is skewed to basic residues. Asp-102 is subject to 3-methylthioaspartic acid.

Belongs to the universal ribosomal protein uS12 family. In terms of assembly, part of the 30S ribosomal subunit. Contacts proteins S8 and S17. May interact with IF1 in the 30S initiation complex.

With S4 and S5 plays an important role in translational accuracy. Functionally, interacts with and stabilizes bases of the 16S rRNA that are involved in tRNA selection in the A site and with the mRNA backbone. Located at the interface of the 30S and 50S subunits, it traverses the body of the 30S subunit contacting proteins on the other side and probably holding the rRNA structure together. The combined cluster of proteins S8, S12 and S17 appears to hold together the shoulder and platform of the 30S subunit. The sequence is that of Small ribosomal subunit protein uS12 from Lactobacillus delbrueckii subsp. bulgaricus (strain ATCC 11842 / DSM 20081 / BCRC 10696 / JCM 1002 / NBRC 13953 / NCIMB 11778 / NCTC 12712 / WDCM 00102 / Lb 14).